A 313-amino-acid chain; its full sequence is Ketimine reductase mu-crystallin (313 aa).

Arg47 is a binding site for 3,3',5-triiodo-L-thyronine. Residues Ser90, His91, Arg118, Ala143, Val145, Gln146, Asn167, Arg168, Thr169, Asn172, Thr204, Met205, and Val225 each contribute to the NADPH site. Glu256 contacts 3,3',5-triiodo-L-thyronine. Ser291 contributes to the NADPH binding site.

This sequence belongs to the ornithine cyclodeaminase/mu-crystallin family. In terms of assembly, homodimer. Binds the thyroid hormone triiodothyronine (T3); T3 binding inhibits enzymatic activity. As to expression, expressed in the spiral ligament of the cochlea (at protein level).

It localises to the cytoplasm. The catalysed reaction is L-pipecolate + NADP(+) = Delta(1)-piperideine-2-carboxylate + NADPH + H(+). It carries out the reaction L-pipecolate + NAD(+) = Delta(1)-piperideine-2-carboxylate + NADH + H(+). It catalyses the reaction L-proline + NADP(+) = 1-pyrroline-2-carboxylate + NADPH + H(+). The enzyme catalyses L-proline + NAD(+) = 1-pyrroline-2-carboxylate + NADH + H(+). The catalysed reaction is (3R)-1,4-thiomorpholine-3-carboxylate + NAD(+) = 3,4-dehydrothiomorpholine-3-carboxylate + NADH + 2 H(+). It carries out the reaction (3R)-1,4-thiomorpholine-3-carboxylate + NADP(+) = 3,4-dehydrothiomorpholine-3-carboxylate + NADPH + 2 H(+). It catalyses the reaction (S)-cystathionine ketimine + NADH + 2 H(+) = (3R,5S)-2,3,5,6,7-pentahydro-1,4-thiazepine-3,5-dicarboxylate + NAD(+). The enzyme catalyses (S)-cystathionine ketimine + NADPH + 2 H(+) = (3R,5S)-2,3,5,6,7-pentahydro-1,4-thiazepine-3,5-dicarboxylate + NADP(+). The catalysed reaction is (R)-lanthionine ketimine + NADPH + 2 H(+) = (3R,5R)-1,4-thiomorpholine-3,5-dicarboxylate + NADP(+). It carries out the reaction Delta(2)-thiazoline-2-carboxylate + NADPH + 2 H(+) = L-thiazolidine-2-carboxylate + NADP(+). In terms of biological role, catalyzes the NAD(P)H-dependent reduction of imine double bonds of a number of cyclic ketimine substrates, including sulfur-containing cyclic ketimines. Under physiological conditions, it efficiently catalyzes delta(1)-piperideine-2-carboxylate (P2C) and delta(1)-pyrroline-2-carboxylate (Pyr2C) reduction, suggesting a central role in lysine and glutamate metabolism. Additional substrates are delta(2)-thiazoline-2-carboxylate (T2C), 3,4-dehydrothiomorpholine-3-carboxylate (AECK), and (R)-lanthionine ketimine (LK) that is reduced at very low rate compared to other substrates. Also catalyzes the NAD(P)H-dependent reduction of (S)-cystathionine ketimine (CysK). The sequence is that of Ketimine reductase mu-crystallin from Mus musculus (Mouse).